The sequence spans 336 residues: Heme A synthase (336 aa).

8 consecutive transmembrane segments (helical) span residues 12–32 (LKLW…VGGL), 97–117 (LLAR…TLYF), 130–150 (IFFL…SGLI), 161–181 (SIHL…ILDI), 194–214 (LFLL…AFLS), 256–276 (FLHR…NFIY), 285–305 (YVLF…ITLI), and 310–330 (ITYA…YFLI). His-258 provides a ligand contact to heme. His-316 contacts heme.

It belongs to the COX15/CtaA family. Type 2 subfamily. In terms of assembly, interacts with CtaB. The cofactor is heme b.

The protein localises to the cell membrane. The catalysed reaction is Fe(II)-heme o + 2 A + H2O = Fe(II)-heme a + 2 AH2. Its pathway is porphyrin-containing compound metabolism; heme A biosynthesis; heme A from heme O: step 1/1. Functionally, catalyzes the conversion of heme O to heme A by two successive hydroxylations of the methyl group at C8. The first hydroxylation forms heme I, the second hydroxylation results in an unstable dihydroxymethyl group, which spontaneously dehydrates, resulting in the formyl group of heme A. In Pelagibacter ubique (strain HTCC1062), this protein is Heme A synthase.